The chain runs to 371 residues: Bifunctional enzyme IspD/IspF (371 aa).

The interval 1 to 212 (MKDITLVLLA…FDFTPASGTI (212 aa)) is 2-C-methyl-D-erythritol 4-phosphate cytidylyltransferase. The segment at 213–371 (FTGNGFDVHA…NLGYFDWRKF (159 aa)) is 2-C-methyl-D-erythritol 2,4-cyclodiphosphate synthase. A divalent metal cation contacts are provided by aspartate 219 and histidine 221. 4-CDP-2-C-methyl-D-erythritol 2-phosphate-binding positions include 219-221 (DVH) and 245-246 (HS). Residue histidine 253 participates in a divalent metal cation binding. Residues 267–269 (DIG), 272–276 (FPDTD), 341–344 (STTE), phenylalanine 348, and arginine 351 contribute to the 4-CDP-2-C-methyl-D-erythritol 2-phosphate site.

The protein in the N-terminal section; belongs to the IspD/TarI cytidylyltransferase family. IspD subfamily. This sequence in the C-terminal section; belongs to the IspF family. A divalent metal cation serves as cofactor.

The catalysed reaction is 2-C-methyl-D-erythritol 4-phosphate + CTP + H(+) = 4-CDP-2-C-methyl-D-erythritol + diphosphate. It carries out the reaction 4-CDP-2-C-methyl-D-erythritol 2-phosphate = 2-C-methyl-D-erythritol 2,4-cyclic diphosphate + CMP. Its pathway is isoprenoid biosynthesis; isopentenyl diphosphate biosynthesis via DXP pathway; isopentenyl diphosphate from 1-deoxy-D-xylulose 5-phosphate: step 2/6. It participates in isoprenoid biosynthesis; isopentenyl diphosphate biosynthesis via DXP pathway; isopentenyl diphosphate from 1-deoxy-D-xylulose 5-phosphate: step 4/6. Bifunctional enzyme that catalyzes the formation of 4-diphosphocytidyl-2-C-methyl-D-erythritol from CTP and 2-C-methyl-D-erythritol 4-phosphate (MEP) (IspD), and catalyzes the conversion of 4-diphosphocytidyl-2-C-methyl-D-erythritol 2-phosphate (CDP-ME2P) to 2-C-methyl-D-erythritol 2,4-cyclodiphosphate (ME-CPP) with a corresponding release of cytidine 5-monophosphate (CMP) (IspF). The polypeptide is Bifunctional enzyme IspD/IspF (Campylobacter hominis (strain ATCC BAA-381 / DSM 21671 / CCUG 45161 / LMG 19568 / NCTC 13146 / CH001A)).